Reading from the N-terminus, the 214-residue chain is MQEIIIQVMNQFGYFGVAFLIMIENIFPPIPSEVILTFGGFMTTYSELGIIGMIIAATIGSVLGALILYFVGRLLSVERLERLVSGRLGKVLRLKPEDITKAEKWFLKRGYATIFFCRFIPLIRSLISVPAGSAKMKLPSFLILTTLGTLIWNIVLVSLGAALGDNWEMIAGILDSYSSVVVAILGVIFILGLLLFVKKRFFPKNKNYSPDSEK.

4 helical membrane passes run 3–23 (EIIIQVMNQFGYFGVAFLIMI), 48–68 (LGIIGMIIAATIGSVLGALIL), 141–161 (FLILTTLGTLIWNIVLVSLGA), and 177–197 (YSSVVVAILGVIFILGLLLFV).

The protein belongs to the DedA family.

The protein localises to the cell membrane. This Lactococcus lactis subsp. cremoris (strain MG1363) protein is Alkaline phosphatase-like protein (apl).